The following is an 803-amino-acid chain: Na(+)/H(+) antiporter subunit A1 (803 aa).

19 consecutive transmembrane segments (helical) span residues 1–21 (MSLL…IPIL), 30–50 (LGWF…SLIS), 79–99 (LSIL…LYSI), 117–137 (LFMG…LYLF), 166–186 (LIIT…ISLA), 208–228 (FIFA…QVPF), 265–285 (LFAI…ITLF), 300–320 (ILAF…GIGA), 337–357 (FTAA…LFMI), 377–397 (LTIM…MAGI), 427–447 (LGIV…VYSI), 472–492 (ILML…GLFP), 522–542 (GITP…LLLL), 591–611 (LVII…SVPF), 621–641 (IHIY…MVVI), 646–666 (LFSV…FVFF), 671–691 (LALT…LCFY), 707–727 (LTNA…GLIA), and 764–784 (MDTL…YTMI).

This sequence belongs to the CPA3 antiporters (TC 2.A.63) subunit A family. As to quaternary structure, may form a heterooligomeric complex that consists of seven subunits: mnhA1, mnhB1, mnhC1, mnhD1, mnhE1, mnhF1 and mnhG1.

Its subcellular location is the cell membrane. Mnh complex is a Na(+)/H(+) antiporter involved in Na(+) excretion. This is Na(+)/H(+) antiporter subunit A1 (mnhA1) from Staphylococcus haemolyticus (strain JCSC1435).